The sequence spans 144 residues: Large ribosomal subunit protein uL11 (144 aa).

Belongs to the universal ribosomal protein uL11 family. Part of the ribosomal stalk of the 50S ribosomal subunit. Interacts with L10 and the large rRNA to form the base of the stalk. L10 forms an elongated spine to which L12 dimers bind in a sequential fashion forming a multimeric L10(L12)X complex. Contacts the CTC protein (RL25). Post-translationally, one or more lysine residues are methylated.

Functionally, forms part of the ribosomal stalk which helps the ribosome interact with GTP-bound translation factors. In Deinococcus radiodurans (strain ATCC 13939 / DSM 20539 / JCM 16871 / CCUG 27074 / LMG 4051 / NBRC 15346 / NCIMB 9279 / VKM B-1422 / R1), this protein is Large ribosomal subunit protein uL11.